We begin with the raw amino-acid sequence, 52 residues long: Histone H2A (52 aa).

Residues 1 to 25 form a disordered region; it reads MSGRGKTGGKARAKAKTRSSRAGLQ. At Ser-2 the chain carries N-acetylserine. Ser-2 is modified (phosphoserine). Lys-6 is modified (N6-(2-hydroxyisobutyryl)lysine). At Lys-6 the chain carries N6-acetyllysine. Positions 7-19 are enriched in basic residues; it reads TGGKARAKAKTRS. Lys-10 carries the post-translational modification N6-(2-hydroxyisobutyryl)lysine; alternate. The residue at position 10 (Lys-10) is an N6-lactoyllysine; alternate. Lys-10 is subject to N6-succinyllysine. Residues Lys-14 and Lys-16 each participate in a glycyl lysine isopeptide (Lys-Gly) (interchain with G-Cter in ubiquitin) cross-link. Position 37 is an N6-(2-hydroxyisobutyryl)lysine; alternate (Lys-37).

The nucleosome is a histone octamer containing two molecules each of H2A, H2B, H3 and H4 assembled in one H3-H4 heterotetramer and two H2A-H2B heterodimers. The octamer wraps approximately 147 bp of DNA. In terms of processing, acetylation is not necessary for the antibacterial activity. Post-translationally, monoubiquitination in C-terminus gives a specific tag for epigenetic transcriptional repression. Following DNA double-strand breaks (DSBs), it is ubiquitinated through 'Lys-63' linkage of ubiquitin moieties, leading to the recruitment of repair proteins to sites of DNA damage. H2AK119Ub and ionizing radiation-induced 'Lys-63'-linked ubiquitination are distinct events. Phosphorylation on Ser-2 is enhanced during mitosis. Phosphorylation on Ser-2 directly represses transcription.

The protein resides in the nucleus. The protein localises to the chromosome. Its subcellular location is the secreted. Functionally, core component of nucleosome. Nucleosomes wrap and compact DNA into chromatin, limiting DNA accessibility to the cellular machineries which require DNA as a template. Histones thereby play a central role in transcription regulation, DNA repair, DNA replication and chromosomal stability. DNA accessibility is regulated via a complex set of post-translational modifications of histones, also called histone code, and nucleosome remodeling. In terms of biological role, hipposin shows strong antimicrobial activity against several Gram-positive and Gram-negative bacteria. The polypeptide is Histone H2A (Hippoglossus hippoglossus (Atlantic halibut)).